We begin with the raw amino-acid sequence, 142 residues long: Transcription antitermination protein NusB (142 aa).

It belongs to the NusB family.

Involved in transcription antitermination. Required for transcription of ribosomal RNA (rRNA) genes. Binds specifically to the boxA antiterminator sequence of the ribosomal RNA (rrn) operons. The polypeptide is Transcription antitermination protein NusB (Thermobifida fusca (strain YX)).